A 618-amino-acid polypeptide reads, in one-letter code: Uptake hydrogenase large subunit (618 aa).

Residues C75, C78, C597, and C600 each coordinate Ni(2+).

It belongs to the [NiFe]/[NiFeSe] hydrogenase large subunit family. In terms of assembly, heterodimer of a large and a small subunit. Ni(2+) serves as cofactor.

It is found in the cell membrane. It carries out the reaction H2 + A = AH2. Functionally, this enzyme recycles the H(2) produced by nitrogenase to increase the production of ATP and to protect nitrogenase against inhibition or damage by O(2) under carbon- or phosphate-limited conditions. The chain is Uptake hydrogenase large subunit (hoxG) from Cupriavidus necator (strain ATCC 17699 / DSM 428 / KCTC 22496 / NCIMB 10442 / H16 / Stanier 337) (Ralstonia eutropha).